Here is a 160-residue protein sequence, read N- to C-terminus: GPI-anchored protein LLG3 (160 aa).

Residues M1 to S23 form the signal peptide. Residue N56 is glycosylated (N-linked (GlcNAc...) asparagine). Residue S137 is the site of GPI-anchor amidated serine attachment. Positions H138–F160 are cleaved as a propeptide — removed in mature form.

Expressed in pollen, pollen tubes, sporophytic pistil tissues, in the early stages of female gametophyte development, and in unfertilized, mature ovules.

It is found in the cell membrane. The polypeptide is GPI-anchored protein LLG3 (Arabidopsis thaliana (Mouse-ear cress)).